A 149-amino-acid polypeptide reads, in one-letter code: D-aminoacyl-tRNA deacylase (149 aa).

Residues 137–138 carry the Gly-cisPro motif, important for rejection of L-amino acids motif; the sequence is GP.

This sequence belongs to the DTD family. Homodimer.

It localises to the cytoplasm. The enzyme catalyses glycyl-tRNA(Ala) + H2O = tRNA(Ala) + glycine + H(+). It catalyses the reaction a D-aminoacyl-tRNA + H2O = a tRNA + a D-alpha-amino acid + H(+). An aminoacyl-tRNA editing enzyme that deacylates mischarged D-aminoacyl-tRNAs. Also deacylates mischarged glycyl-tRNA(Ala), protecting cells against glycine mischarging by AlaRS. Acts via tRNA-based rather than protein-based catalysis; rejects L-amino acids rather than detecting D-amino acids in the active site. By recycling D-aminoacyl-tRNA to D-amino acids and free tRNA molecules, this enzyme counteracts the toxicity associated with the formation of D-aminoacyl-tRNA entities in vivo and helps enforce protein L-homochirality. The sequence is that of D-aminoacyl-tRNA deacylase from Leuconostoc mesenteroides subsp. mesenteroides (strain ATCC 8293 / DSM 20343 / BCRC 11652 / CCM 1803 / JCM 6124 / NCDO 523 / NBRC 100496 / NCIMB 8023 / NCTC 12954 / NRRL B-1118 / 37Y).